The chain runs to 527 residues: MYTPANNHNRSLAMSTQPTPAAARHCKVAIIGTGFSGLGMAIRLRQEGEDDFLIFEKDAGVGGTWRVNNYPGCACDVQSHVYSFSFEANPEWTRMFARQPEIRAYLEKCWEKYRLQEKTLLNTEIGKLAWDERQSLWHLHDAQGNHYTANAVVSGMGGLSTPAYPRLDGLENFQGKVFHSQQWDHDYDLKGKRVAVIGTGASAIQFVPEIQPLVAALDLYQRTPPWILPKPDRAISETERRRFRRFPLVQKLWRGGLYSLLEGRVLGFTFAPQVMKLVQRLAIRHIHKQIKDPELRRKVTPDYTIGCKRILMSHNYYPALAAANSTVITEGIRAVTANGIVDGNGREREVDAIIFGTGFTANDPIPRGVVFGRDGRDLLDSWSKGPEAYKGTTTAGFPNLFFLMGPNTGLGHNSMVYMIESQIAYVLDALKLMKRRELLSLEVKAPVQERYNEYLQRKLDRSVWSVGGCKSWYLHPVSGRNCTLWPGFTWRFRALTRQFDASAYHLTTTPLAALSNEARQQAEGVPA.

FAD-binding positions include Ser36, Glu56, 64-67, Asp76, Tyr82, and Ile125; that span reads TWRV. Residue 74-76 participates in NADP(+) binding; it reads ACD. Residues 199-205, 222-223, and 308-309 contribute to the NADP(+) site; these read TGASAIQ, RT, and KR. Residue Met415 participates in FAD binding.

The protein belongs to the FAD-binding monooxygenase family. FAD is required as a cofactor.

In terms of biological role, catalyzes a Baeyer-Villiger oxidation reaction, i.e. the insertion of an oxygen atom into a carbon-carbon bond adjacent to a carbonyl, which converts ketones to esters or lactones using NADPH and/or NADH as an electron donor. Thus, can convert bicyclo[3.2.0]hept-2-en-6-one into the oxidative lactone products 2-oxabicyclo[3.3.0]oct-6-en-3-one and 3-oxabicyclo[3.3.0]oct-6-en-2-one. Is also able to catalyze the sulfoxidation of methyl phenyl sulfide (thioanisole). The protein is Baeyer-Villiger monooxygenase of Pseudomonas aeruginosa (strain ATCC 15692 / DSM 22644 / CIP 104116 / JCM 14847 / LMG 12228 / 1C / PRS 101 / PAO1).